The following is a 330-amino-acid chain: L-tryptophan isonitrile synthase AmbI2 (330 aa).

The protein belongs to the isocyanide synthase family.

The catalysed reaction is D-ribulose 5-phosphate + L-tryptophan = (2S)-3-(1H-indol-3-yl)-2-isocyanopropanoate + hydroxyacetone + formaldehyde + phosphate + H2O + H(+). Functionally, involved in the biosynthesis of ambiguines, a family of hapalindole-type alkaloids. Responsible for the synthesis of the isonitrile group on tryptophan using ribulose 5-phosphate as the source of the carbon atom. This chain is L-tryptophan isonitrile synthase AmbI2, found in Fischerella ambigua (strain UTEX 1903).